We begin with the raw amino-acid sequence, 357 residues long: Serine/threonine-protein kinase nekl-2 (357 aa).

The Protein kinase domain maps to 4–267 (YEKVRVVGRG…VSQLLSDPLV (264 aa)). ATP-binding positions include 10 to 18 (VGRGAFGVC) and Lys-35. The active-site Proton acceptor is the Asp-137. Residues 281–290 (IEPPPTDKRK) are compositionally biased toward basic and acidic residues. Residues 281 to 357 (IEPPPTDKRK…QSRSQVHSKY (77 aa)) form a disordered region. Polar residues-rich tracts occupy residues 293–327 (ASLS…QLTP) and 336–357 (FFSS…HSKY).

The protein belongs to the protein kinase superfamily. NEK Ser/Thr protein kinase family. NIMA subfamily. Mg(2+) serves as cofactor. As to expression, expressed in hypodermal cells including in hyp7 syncytium but not in seam cells.

The protein localises to the cytoplasm. It carries out the reaction L-seryl-[protein] + ATP = O-phospho-L-seryl-[protein] + ADP + H(+). The catalysed reaction is L-threonyl-[protein] + ATP = O-phospho-L-threonyl-[protein] + ADP + H(+). Probable serine/threonine-protein kinase required for the completion of molting. May play a role in endocytosis in the hypodermis syncytium. The sequence is that of Serine/threonine-protein kinase nekl-2 from Caenorhabditis elegans.